The sequence spans 38 residues: Large ribosomal subunit protein bL36 (38 aa).

Belongs to the bacterial ribosomal protein bL36 family.

This is Large ribosomal subunit protein bL36 from Chlorobaculum parvum (strain DSM 263 / NCIMB 8327) (Chlorobium vibrioforme subsp. thiosulfatophilum).